The primary structure comprises 218 residues: 3,4-dihydroxy-2-butanone 4-phosphate synthase (218 aa).

Residues 38-39 (RE), aspartate 43, 151-155 (RRGHT), and glutamate 175 each bind D-ribulose 5-phosphate. Glutamate 39 provides a ligand contact to Mg(2+). Histidine 154 provides a ligand contact to Mg(2+).

This sequence belongs to the DHBP synthase family. Homodimer. The cofactor is Mg(2+). Mn(2+) serves as cofactor.

It carries out the reaction D-ribulose 5-phosphate = (2S)-2-hydroxy-3-oxobutyl phosphate + formate + H(+). Its pathway is cofactor biosynthesis; riboflavin biosynthesis; 2-hydroxy-3-oxobutyl phosphate from D-ribulose 5-phosphate: step 1/1. Catalyzes the conversion of D-ribulose 5-phosphate to formate and 3,4-dihydroxy-2-butanone 4-phosphate. This chain is 3,4-dihydroxy-2-butanone 4-phosphate synthase, found in Shewanella frigidimarina (strain NCIMB 400).